The chain runs to 140 residues: Seminal plasma protein A3 (140 aa).

Positions 1-25 are cleaved as a signal peptide; that stretch reads MALRLGLFLIWAGVSMFLQLDPVNG. Fibronectin type-II domains follow at residues 49–93 and 94–140; these read TKDN…YCTK and NDYA…WKYC. Intrachain disulfides connect cysteine 54/cysteine 78, cysteine 68/cysteine 91, cysteine 99/cysteine 125, and cysteine 113/cysteine 140.

It belongs to the seminal plasma protein family.

Its subcellular location is the secreted. In terms of biological role, the BSP-A proteins from seminal plasma exhibit both simulatory and inhibitory actions on the release of pituitary gonadotropins. The exact function of these proteins is not known. This is Seminal plasma protein A3 from Bos taurus (Bovine).